Consider the following 292-residue polypeptide: UTP--glucose-1-phosphate uridylyltransferase (292 aa).

This sequence belongs to the UDPGP type 2 family. Interacts with FloT.

Its subcellular location is the cell membrane. The protein localises to the membrane raft. The catalysed reaction is alpha-D-glucose 1-phosphate + UTP + H(+) = UDP-alpha-D-glucose + diphosphate. Its pathway is glycolipid metabolism; diglucosyl-diacylglycerol biosynthesis. Its function is as follows. Catalyzes the formation of UDP-glucose from glucose-1-phosphate and UTP. This is an intermediate step in the biosynthesis of diglucosyl-diacylglycerol (Glc2-DAG), i.e. the predominant glycolipid found in B.subtilis membrane, which is also used as a membrane anchor for lipoteichoic acid (LTA). Has a role in the biosynthesis of all phosphate-containing envelope polymers, since UDP-glucose serves as a glucosyl donor not only for the biosynthesis of LTA but also for wall teichoic acids (WTAs). Is required for biofilm formation. This is likely due to another role of UDP-glucose, which might also act as a metabolic signal regulating biofilm formation or may be involved in some unknown biosynthetic pathway essential for biofilm formation, e.g. the synthesis of an exopolysaccharide. The polypeptide is UTP--glucose-1-phosphate uridylyltransferase (gtaB) (Bacillus subtilis (strain 168)).